The primary structure comprises 62 residues: E3 SUMO-protein ligase EGR2 (62 aa).

3 consecutive C2H2-type zinc fingers follow at residues 1-21 (AEGC…IRIH), 27-49 (FQCA…IRTH), and 55-62 (FACDYCGR).

Belongs to the EGR C2H2-type zinc-finger protein family. As to quaternary structure, interacts with HCFC1. Interacts with WWP2. Interacts with UBC9. Interacts with CITED1. Interacts (via phosphorylated form) with SFN. Ubiquitinated by WWP2 leading to proteasomal degradation. Post-translationally, acetylated. May be deacetylated by HDAC6, HDAC10 or SIRT1.

The protein localises to the nucleus. It participates in protein modification; protein sumoylation. Functionally, sequence-specific DNA-binding transcription factor. Plays a role in hindbrain segmentation by regulating the expression of a subset of homeobox containing genes and in Schwann cell myelination by regulating the expression of genes involved in the formation and maintenance of myelin. Binds to two EGR2-consensus sites EGR2A (5'-CTGTAGGAG-3') and EGR2B (5'-ATGTAGGTG-3') in the HOXB3 enhancer and promotes HOXB3 transcriptional activation. Binds to specific DNA sites located in the promoter region of HOXA4, HOXB2 and ERBB2. Regulates hindbrain segmentation by controlling the expression of Hox genes, such as HOXA4, HOXB3 and HOXB2, and thereby specifying odd and even rhombomeres. Promotes the expression of HOXB3 in the rhombomere r5 in the hindbrain. Regulates myelination in the peripheral nervous system after birth, possibly by regulating the expression of myelin proteins, such as MPZ, and by promoting the differentiation of Schwann cells. Involved in the development of the jaw openener musculature, probably by playing a role in its innervation through trigeminal motor neurons. May play a role in adipogenesis, possibly by regulating the expression of CEBPB. E3 SUMO-protein ligase helping SUMO1 conjugation to its coregulators NAB1 and NAB2, whose sumoylation down-regulates EGR2 transcriptional activity. The polypeptide is E3 SUMO-protein ligase EGR2 (EGR2) (Cerdocyon thous (Crab-eating fox)).